Here is a 701-residue protein sequence, read N- to C-terminus: DNA ligase (701 aa).

NAD(+) contacts are provided by residues 58–62 (DYEYD), 107–108 (SL), and Glu-138. The N6-AMP-lysine intermediate role is filled by Lys-140. Arg-161, Glu-199, Lys-323, and Lys-347 together coordinate NAD(+). Zn(2+) contacts are provided by Cys-441, Cys-444, Cys-459, and Cys-464. The region spanning 621 to 701 (EKRGKLAGLN…EEFLKMIGQQ (81 aa)) is the BRCT domain.

This sequence belongs to the NAD-dependent DNA ligase family. LigA subfamily. Mg(2+) is required as a cofactor. Mn(2+) serves as cofactor.

It catalyses the reaction NAD(+) + (deoxyribonucleotide)n-3'-hydroxyl + 5'-phospho-(deoxyribonucleotide)m = (deoxyribonucleotide)n+m + AMP + beta-nicotinamide D-nucleotide.. In terms of biological role, DNA ligase that catalyzes the formation of phosphodiester linkages between 5'-phosphoryl and 3'-hydroxyl groups in double-stranded DNA using NAD as a coenzyme and as the energy source for the reaction. It is essential for DNA replication and repair of damaged DNA. This is DNA ligase from Sulfurihydrogenibium azorense (strain DSM 15241 / OCM 825 / Az-Fu1).